We begin with the raw amino-acid sequence, 197 residues long: MVSVVGEMFCNPYTTELVVRRRRESLKRERYDVFDLSNNLIFTVDGGIWNIRRKRVLRDAAGIPLLSMRTKGLVPMRYNWEVYKGDSTESDNLLFSAREPNLLSFKTSLDVTLPPDQSSTDISSVEPDFQTFGRYIGSSFKLFEPIHNTLLAEVVHDFTWGGLIKGSYSFKVRVNPYVDFAFVVALLVITDDTSNLR.

This sequence belongs to the LOR family.

Might be related to the phospholipid scramblase and tubby-like superfamily of membrane tethered transcription factors. This is Protein LURP-one-related 9 from Arabidopsis thaliana (Mouse-ear cress).